The chain runs to 213 residues: Thymidylate kinase (213 aa).

An ATP-binding site is contributed by 10-17 (GLEGAGKT).

This sequence belongs to the thymidylate kinase family.

The catalysed reaction is dTMP + ATP = dTDP + ADP. Phosphorylation of dTMP to form dTDP in both de novo and salvage pathways of dTTP synthesis. This chain is Thymidylate kinase, found in Escherichia fergusonii (strain ATCC 35469 / DSM 13698 / CCUG 18766 / IAM 14443 / JCM 21226 / LMG 7866 / NBRC 102419 / NCTC 12128 / CDC 0568-73).